The chain runs to 446 residues: Deoxyguanosinetriphosphate triphosphohydrolase-like protein (446 aa).

Residues 1–28 (MSSSVWQERRHGEDKQRRNDHRSPFQRD) form a disordered region. The span at 7–28 (QERRHGEDKQRRNDHRSPFQRD) shows a compositional bias: basic and acidic residues. An HD domain is found at 59-252 (RLTHSLEVSQ…MELADDIAYA (194 aa)).

It belongs to the dGTPase family. Type 2 subfamily.

In Shewanella sp. (strain ANA-3), this protein is Deoxyguanosinetriphosphate triphosphohydrolase-like protein.